Consider the following 93-residue polypeptide: MNRSMIALCVVLMVSLVSAQVFDLDGQQLAGLEQNDARLMEQQVKRSPSAKWMRFGKRSPSAKWMRFGKRSPSAKWMRFGKRSGAEAVSEQDY.

An N-terminal signal peptide occupies residues 1–19 (MNRSMIALCVVLMVSLVSA). Residues 20 to 46 (QVFDLDGQQLAGLEQNDARLMEQQVKR) constitute a propeptide that is removed on maturation. Residues Phe-55, Phe-67, and Phe-79 each carry the phenylalanine amide modification. Residues 83–93 (SGAEAVSEQDY) constitute a propeptide that is removed on maturation.

This sequence belongs to the FARP (FMRFamide related peptide) family.

Its subcellular location is the secreted. Its function is as follows. FMRFamides and FMRFamide-like peptides are neuropeptides. SPSAKWMRF-amide: Acts as a ligand for the npr-22 receptor in vitro. In Caenorhabditis elegans, this protein is FMRFamide-like neuropeptides 22.